Reading from the N-terminus, the 404-residue chain is Formate-dependent phosphoribosylglycinamide formyltransferase (404 aa).

Residues 25–26 (EL) and Glu85 contribute to the N(1)-(5-phospho-beta-D-ribosyl)glycinamide site. ATP-binding positions include Arg118, Lys159, 164–169 (SSGKGQ), 199–202 (EGFI), and Glu207. An ATP-grasp domain is found at 123–318 (RLAAEELGLP…EFELHARAIL (196 aa)). Mg(2+) contacts are provided by Glu277 and Glu289. N(1)-(5-phospho-beta-D-ribosyl)glycinamide contacts are provided by residues Asp296, Lys365, and 372 to 373 (RR). Residues 384–404 (TDEARSRAKQAAAAVRPVSAK) are disordered. Positions 392 to 404 (KQAAAAVRPVSAK) are enriched in low complexity.

The protein belongs to the PurK/PurT family. As to quaternary structure, homodimer.

The enzyme catalyses N(1)-(5-phospho-beta-D-ribosyl)glycinamide + formate + ATP = N(2)-formyl-N(1)-(5-phospho-beta-D-ribosyl)glycinamide + ADP + phosphate + H(+). It functions in the pathway purine metabolism; IMP biosynthesis via de novo pathway; N(2)-formyl-N(1)-(5-phospho-D-ribosyl)glycinamide from N(1)-(5-phospho-D-ribosyl)glycinamide (formate route): step 1/1. Its function is as follows. Involved in the de novo purine biosynthesis. Catalyzes the transfer of formate to 5-phospho-ribosyl-glycinamide (GAR), producing 5-phospho-ribosyl-N-formylglycinamide (FGAR). Formate is provided by PurU via hydrolysis of 10-formyl-tetrahydrofolate. This is Formate-dependent phosphoribosylglycinamide formyltransferase from Paraburkholderia xenovorans (strain LB400).